The primary structure comprises 318 residues: Porphobilinogen deaminase (318 aa).

The residue at position 241 (Cys241) is an S-(dipyrrolylmethanemethyl)cysteine.

This sequence belongs to the HMBS family. As to quaternary structure, monomer. Requires dipyrromethane as cofactor.

It carries out the reaction 4 porphobilinogen + H2O = hydroxymethylbilane + 4 NH4(+). It participates in porphyrin-containing compound metabolism; protoporphyrin-IX biosynthesis; coproporphyrinogen-III from 5-aminolevulinate: step 2/4. In terms of biological role, tetrapolymerization of the monopyrrole PBG into the hydroxymethylbilane pre-uroporphyrinogen in several discrete steps. The chain is Porphobilinogen deaminase from Citrifermentans bemidjiense (strain ATCC BAA-1014 / DSM 16622 / JCM 12645 / Bem) (Geobacter bemidjiensis).